Reading from the N-terminus, the 170-residue chain is Shikimate kinase (170 aa).

15–20 (GAGKTT) lines the ATP pocket. Threonine 19 lines the Mg(2+) pocket. 3 residues coordinate substrate: aspartate 37, arginine 61, and glycine 83. Arginine 121 provides a ligand contact to ATP. A substrate-binding site is contributed by arginine 140.

It belongs to the shikimate kinase family. Monomer. The cofactor is Mg(2+).

The protein resides in the cytoplasm. It carries out the reaction shikimate + ATP = 3-phosphoshikimate + ADP + H(+). The protein operates within metabolic intermediate biosynthesis; chorismate biosynthesis; chorismate from D-erythrose 4-phosphate and phosphoenolpyruvate: step 5/7. In terms of biological role, catalyzes the specific phosphorylation of the 3-hydroxyl group of shikimic acid using ATP as a cosubstrate. The protein is Shikimate kinase of Neisseria meningitidis serogroup C (strain 053442).